Consider the following 326-residue polypeptide: Phospho-N-acetylmuramoyl-pentapeptide-transferase (326 aa).

A run of 10 helical transmembrane segments spans residues 13 to 33 (ILAP…IFIP), 57 to 77 (GTPT…ILIM), 85 to 105 (EMIL…DDIL), 121 to 141 (MILL…NVGT), 155 to 175 (NLGI…TNAV), 181 to 201 (IDGL…IIGF), 208 to 228 (VAVF…FNAF), 232 to 252 (IFMG…IALM), 257 to 277 (LFVI…IIQV), and 305 to 325 (VKIV…GFVA).

It belongs to the glycosyltransferase 4 family. MraY subfamily. Mg(2+) is required as a cofactor.

It localises to the cell membrane. The enzyme catalyses UDP-N-acetyl-alpha-D-muramoyl-L-alanyl-gamma-D-glutamyl-meso-2,6-diaminopimeloyl-D-alanyl-D-alanine + di-trans,octa-cis-undecaprenyl phosphate = di-trans,octa-cis-undecaprenyl diphospho-N-acetyl-alpha-D-muramoyl-L-alanyl-D-glutamyl-meso-2,6-diaminopimeloyl-D-alanyl-D-alanine + UMP. It functions in the pathway cell wall biogenesis; peptidoglycan biosynthesis. Catalyzes the initial step of the lipid cycle reactions in the biosynthesis of the cell wall peptidoglycan: transfers peptidoglycan precursor phospho-MurNAc-pentapeptide from UDP-MurNAc-pentapeptide onto the lipid carrier undecaprenyl phosphate, yielding undecaprenyl-pyrophosphoryl-MurNAc-pentapeptide, known as lipid I. The chain is Phospho-N-acetylmuramoyl-pentapeptide-transferase from Clostridium beijerinckii (strain ATCC 51743 / NCIMB 8052) (Clostridium acetobutylicum).